A 131-amino-acid chain; its full sequence is D-ribose pyranase (131 aa).

H20 (proton donor) is an active-site residue. Substrate-binding positions include D28, H98, and 120–122; that span reads YSN.

Belongs to the RbsD / FucU family. RbsD subfamily. Homodecamer.

Its subcellular location is the cytoplasm. The enzyme catalyses beta-D-ribopyranose = beta-D-ribofuranose. Its pathway is carbohydrate metabolism; D-ribose degradation; D-ribose 5-phosphate from beta-D-ribopyranose: step 1/2. Its function is as follows. Catalyzes the interconversion of beta-pyran and beta-furan forms of D-ribose. This chain is D-ribose pyranase, found in Lactiplantibacillus plantarum (strain ATCC BAA-793 / NCIMB 8826 / WCFS1) (Lactobacillus plantarum).